Reading from the N-terminus, the 515-residue chain is 1-pyrroline-5-carboxylate dehydrogenase (515 aa).

Residues Glu286 and Cys320 contribute to the active site.

The protein belongs to the aldehyde dehydrogenase family. RocA subfamily.

The enzyme catalyses L-glutamate 5-semialdehyde + NAD(+) + H2O = L-glutamate + NADH + 2 H(+). It participates in amino-acid degradation; L-proline degradation into L-glutamate; L-glutamate from L-proline: step 2/2. The protein is 1-pyrroline-5-carboxylate dehydrogenase of Geobacillus sp. (strain WCH70).